The sequence spans 369 residues: Proton-coupled zinc antiporter SLC30A8 (369 aa).

Topologically, residues 1–79 are cytoplasmic; it reads MEFLERTYLV…AKWKLCSASA (79 aa). Positions 31-52 are disordered; it reads PVNKDQCPRERPEELESGGMYH. Over residues 32 to 44 the composition is skewed to basic and acidic residues; the sequence is VNKDQCPRERPEE. Zn(2+)-binding residues include H52, C53, and H54. Residues 52 to 54 carry the HCH Motif; seals regulatory zinc-binding pocket motif; it reads HCH. A helical transmembrane segment spans residues 80–100; it reads ICFIFMIAEVVGGHIAGSLAV. Residues 101 to 103 lie on the Lumenal, vesicle side of the membrane; sequence VTD. The helical transmembrane segment at 104 to 124 threads the bilayer; it reads AAHLLIDLTSFLLSLFSLWLS. Zn(2+) is bound by residues H106, D110, and H137. At 125 to 140 the chain is on the cytoplasmic side; sequence SKPPSKRLTFGWHRAE. Residues 141-161 form a helical membrane-spanning segment; the sequence is ILGALLSILCIWVVTGVLVYL. The Lumenal, vesicle segment spans residues 162–175; sequence ACERLLYPDYQIQA. Residues 176–196 traverse the membrane as a helical segment; the sequence is TVMIIVSSCAVAANIVLTVVL. Residues 197-217 lie on the Cytoplasmic side of the membrane; it reads HQRCLGHNHKEVQANASVRAA. The helical transmembrane segment at 218 to 238 threads the bilayer; that stretch reads FVHALGDLFQSISVLISALII. Residues H220 and D224 each coordinate Zn(2+). At 239 to 245 the chain is on the lumenal, vesicle side; it reads YFKPEYK. Residues 246-266 traverse the membrane as a helical segment; it reads IADPICTFIFSILVLASTITI. At 267-369 the chain is on the cytoplasmic side; the sequence is LKDFSILLME…DCLFCEDPCD (103 aa). Residues H301, H318, H345, E352, C361, and C364 each coordinate Zn(2+).

Belongs to the cation diffusion facilitator (CDF) transporter (TC 2.A.4) family. SLC30A subfamily. As to quaternary structure, homodimer. As to expression, in the endocrine pancreas, expressed in insulin-producing beta cells. Expressed at relatively high levels in subcutaneous fat tissue from lean persons; much lower levels in visceral fat, whether from lean or obese individuals, and in subcutaneous fat tissue from obese individuals. Expressed in peripheral blood mononuclear cells, including T-cells and B-cells, with great variation among individuals ranging from negative to strongly positive.

It localises to the cytoplasmic vesicle. It is found in the secretory vesicle membrane. The protein localises to the cell membrane. It catalyses the reaction Zn(2+)(in) + 2 H(+)(out) = Zn(2+)(out) + 2 H(+)(in). In terms of biological role, proton-coupled zinc ion antiporter mediating the entry of zinc into the lumen of pancreatic beta cell secretory granules, thereby regulating insulin secretion. This Homo sapiens (Human) protein is Proton-coupled zinc antiporter SLC30A8.